The sequence spans 524 residues: Magnesium/proton exchanger 2 (524 aa).

A run of 11 helical transmembrane segments spans residues 28 to 48 (GVRA…LSAI), 88 to 108 (IADV…LATI), 125 to 145 (GTLV…CVVM), 157 to 177 (LGVW…LYII), 185 to 205 (VITL…LLHA), 325 to 345 (VIGI…AFIP), 349 to 369 (IAHG…IAYG), 377 to 397 (ISCV…AAGT), 430 to 450 (IYVG…LFVY), 462 to 482 (LSFS…VLVL), and 496 to 516 (MWAW…VVLS).

This sequence belongs to the Ca(2+):cation antiporter (CaCA) (TC 2.A.19) family. MHX subfamily.

Its subcellular location is the vacuole membrane. Its function is as follows. Vacuolar transporter that exchanges protons with Mg(2+), Zn(2+) and Fe(2+) ions. May control the partitioning of Mg(2+) and Zn(2+) between plant organs. The protein is Magnesium/proton exchanger 2 (MHX2) of Oryza sativa subsp. japonica (Rice).